A 421-amino-acid polypeptide reads, in one-letter code: E3 ubiquitin protein ligase DRIP1 (421 aa).

The RING-type zinc-finger motif lies at 16–57 (CSICDNILRDATTISECLHTFCRKCIYEKITEDEIETCPVCN). 2 stretches are compositionally biased toward polar residues: residues 106–121 (ISSLVVSTPMVSAQAG) and 157–172 (ESTSSPDTLNKFTQNK). 2 disordered regions span residues 106–198 (ISSL…WDSK) and 216–307 (PLKS…QERR). Basic and acidic residues predominate over residues 178–198 (SCKESISNKENKDGDEPWDSK). Over residues 218 to 227 (KSSASQGSGS) the composition is skewed to low complexity. The span at 244–253 (TKTKNKKRKC) shows a compositional bias: basic residues. Positions 262–271 (NGDPTTSETV) are enriched in polar residues. Over residues 274 to 284 (KRMRTTQRKRS) the composition is skewed to basic residues. Residues 285–294 (ATTLGDSRNL) show a composition bias toward polar residues.

In terms of assembly, interacts with DREB2A. Autoubiquitinated. In terms of tissue distribution, expressed in roots, leaves and flowers.

It is found in the nucleus. The catalysed reaction is S-ubiquitinyl-[E2 ubiquitin-conjugating enzyme]-L-cysteine + [acceptor protein]-L-lysine = [E2 ubiquitin-conjugating enzyme]-L-cysteine + N(6)-ubiquitinyl-[acceptor protein]-L-lysine.. Its pathway is protein modification; protein ubiquitination. In terms of biological role, E3 ubiquitin-protein ligase that acts as a negative regulator of the response to water stress. Mediates ubiquitination and subsequent proteasomal degradation of the drought-induced transcriptional activator DREB2A. Functionally redundant with DRIP2. The chain is E3 ubiquitin protein ligase DRIP1 (DRIP1) from Arabidopsis thaliana (Mouse-ear cress).